Reading from the N-terminus, the 119-residue chain is Holo-[acyl-carrier-protein] synthase (119 aa).

Asp-8 and Glu-59 together coordinate Mg(2+).

Belongs to the P-Pant transferase superfamily. AcpS family. Requires Mg(2+) as cofactor.

The protein localises to the cytoplasm. It catalyses the reaction apo-[ACP] + CoA = holo-[ACP] + adenosine 3',5'-bisphosphate + H(+). Transfers the 4'-phosphopantetheine moiety from coenzyme A to a Ser of acyl-carrier-protein. In Streptococcus agalactiae serotype Ia (strain ATCC 27591 / A909 / CDC SS700), this protein is Holo-[acyl-carrier-protein] synthase.